We begin with the raw amino-acid sequence, 535 residues long: uncharacterized protein (535 aa).

The segment at 1–34 is disordered; sequence MKAIDNQIRNISSSHQDKHSDKVNSHQHHGKVDK. Basic and acidic residues predominate over residues 15-34; sequence HQDKHSDKVNSHQHHGKVDK.

This is an uncharacterized protein from Escherichia coli (strain K12).